Reading from the N-terminus, the 313-residue chain is Potassium channel subfamily K member 6 (313 aa).

Residues 1 to 4 (MRRG) lie on the Cytoplasmic side of the membrane. The helical transmembrane segment at 5-25 (ALLAGALAAYAAYLVLGALLV) threads the bilayer. N79 and N85 each carry an N-linked (GlcNAc...) asparagine glycan. Positions 90-115 (AWDFASALFFASTLITTVGYGYTTPL) form an intramembrane region, pore-forming. The K(+) site is built by T106, V107, G108, and Y109. The interval 106-111 (TVGYGY) is selectivity filter 1. Residues 121-141 (AFSIAFALLGVPTTMLLLTAS) traverse the membrane as a helical segment. Over 142 to 172 (AQRLSLLLTHVPLSWLSMRWGWDPRRAACWH) the chain is Cytoplasmic. The chain crosses the membrane as a helical span at residues 173–193 (LVALLGVVVTVCFLVPAVIFA). Positions 199 to 223 (WSFLDAFYFCFISLSTIGLGDYVPG) form an intramembrane region, pore-forming. The K(+) site is built by T214, I215, and G216. The segment at 214 to 219 (TIGLGD) is selectivity filter 2. A helical membrane pass occupies residues 236–256 (VLVTVYLFLGLVAMVLVLQTF). Over 257–313 (RHVSDLHGLTELILLPPPCPASFNADEDDRVDILGPQPESHQQLSASSHTDYASIPR) the chain is Cytoplasmic. Positions 282–290 (DEDDRVDIL) match the Lysosomal targeting signal motif. The disordered stretch occupies residues 288-313 (DILGPQPESHQQLSASSHTDYASIPR). Positions 295–307 (ESHQQLSASSHTD) are enriched in polar residues. Residues 308-312 (YASIP) carry the Lysosomal targeting signal motif.

It belongs to the two pore domain potassium channel (TC 1.A.1.8) family. As to quaternary structure, homodimer; disulfide-linked. In terms of processing, N-glycosylation is necessary for targeting to lysosomes. Widespread expression, detected in all tissues tested except for skeletal muscle. Strongest expression in placenta, pancreas, heart, colon and spleen, lower levels detected in peripheral blood leukocytes, lung, liver, kidney and thymus. Lowest expression detected in brain.

It localises to the late endosome membrane. The protein resides in the lysosome membrane. The catalysed reaction is K(+)(in) = K(+)(out). In terms of biological role, k(+) channel that conducts outward rectifying currents at the membranes of the endolysosomal system. Active in lysosomes where it regulates lysosome numbers and size. In macrophages, enables K(+) efflux coupled to ATP-induced NLRP3 inflammasome activation upon bacterial infection. Cooperates with ATP-gated P2RX7 channels to activate NLRP3 inflammasome, with P2RX7 conducting Ca(2+) and Na(+) influx that sets the membrane potential for K(+) efflux. Its function is as follows. Does not display channel activity. This is Potassium channel subfamily K member 6 from Homo sapiens (Human).